Reading from the N-terminus, the 346-residue chain is Dihydroorotase (346 aa).

2 residues coordinate Zn(2+): His-13 and His-15. Substrate-binding positions include 15 to 17 (HLR) and Asn-41. Zn(2+) contacts are provided by Lys-99, His-136, and His-174. Lys-99 carries the N6-carboxylysine modification. His-136 is a substrate binding site. A substrate-binding site is contributed by Leu-219. Zn(2+) is bound at residue Asp-247. The active site involves Asp-247. Substrate is bound by residues His-251 and Ala-263.

Belongs to the metallo-dependent hydrolases superfamily. DHOase family. Class II DHOase subfamily. In terms of assembly, homodimer. It depends on Zn(2+) as a cofactor.

The catalysed reaction is (S)-dihydroorotate + H2O = N-carbamoyl-L-aspartate + H(+). Its pathway is pyrimidine metabolism; UMP biosynthesis via de novo pathway; (S)-dihydroorotate from bicarbonate: step 3/3. In terms of biological role, catalyzes the reversible cyclization of carbamoyl aspartate to dihydroorotate. The protein is Dihydroorotase of Rhizobium rhizogenes (strain K84 / ATCC BAA-868) (Agrobacterium radiobacter).